We begin with the raw amino-acid sequence, 367 residues long: Cytochrome b (367 aa).

Helical transmembrane passes span 20-40, 64-85, 101-121, and 166-186; these read MGSI…LLSM, WFLR…YAHI, WMVG…GYVL, and FFSL…LHII. 2 residues coordinate heme b: His-70 and His-84. Heme b is bound by residues His-170 and His-184. Residue His-189 participates in a ubiquinone binding. 4 helical membrane passes run 214-234, 276-296, 308-328, and 335-355; these read IKDS…TFFS, LGGV…PLSS, IYQV…WLGA, and YLSL…LLGM.

The protein belongs to the cytochrome b family. In terms of assembly, the main subunits of complex b-c1 are: cytochrome b, cytochrome c1 and the Rieske protein. It depends on heme b as a cofactor.

It is found in the mitochondrion inner membrane. Its function is as follows. Component of the ubiquinol-cytochrome c reductase complex (complex III or cytochrome b-c1 complex) that is part of the mitochondrial respiratory chain. The b-c1 complex mediates electron transfer from ubiquinol to cytochrome c. Contributes to the generation of a proton gradient across the mitochondrial membrane that is then used for ATP synthesis. This chain is Cytochrome b (MT-CYB), found in Albinaria caerulea (Land snail).